The chain runs to 193 residues: ATP-dependent Clp protease proteolytic subunit 2 (193 aa).

The active-site Nucleophile is Ser-98. His-123 is a catalytic residue.

This sequence belongs to the peptidase S14 family. As to quaternary structure, fourteen ClpP subunits assemble into 2 heptameric rings which stack back to back to give a disk-like structure with a central cavity, resembling the structure of eukaryotic proteasomes.

The protein resides in the cytoplasm. The enzyme catalyses Hydrolysis of proteins to small peptides in the presence of ATP and magnesium. alpha-casein is the usual test substrate. In the absence of ATP, only oligopeptides shorter than five residues are hydrolyzed (such as succinyl-Leu-Tyr-|-NHMec, and Leu-Tyr-Leu-|-Tyr-Trp, in which cleavage of the -Tyr-|-Leu- and -Tyr-|-Trp bonds also occurs).. In terms of biological role, cleaves peptides in various proteins in a process that requires ATP hydrolysis. Has a chymotrypsin-like activity. Plays a major role in the degradation of misfolded proteins. This Bacillus anthracis protein is ATP-dependent Clp protease proteolytic subunit 2.